We begin with the raw amino-acid sequence, 271 residues long: 3-methyl-2-oxobutanoate hydroxymethyltransferase (271 aa).

Mg(2+) contacts are provided by aspartate 49 and aspartate 88. Residues 49 to 50 (DS), aspartate 88, and lysine 118 each bind 3-methyl-2-oxobutanoate. A Mg(2+)-binding site is contributed by glutamate 120. Catalysis depends on glutamate 187, which acts as the Proton acceptor.

Belongs to the PanB family. In terms of assembly, homodecamer; pentamer of dimers. Mg(2+) serves as cofactor.

The protein resides in the cytoplasm. It catalyses the reaction 3-methyl-2-oxobutanoate + (6R)-5,10-methylene-5,6,7,8-tetrahydrofolate + H2O = 2-dehydropantoate + (6S)-5,6,7,8-tetrahydrofolate. Its pathway is cofactor biosynthesis; (R)-pantothenate biosynthesis; (R)-pantoate from 3-methyl-2-oxobutanoate: step 1/2. Its function is as follows. Catalyzes the reversible reaction in which hydroxymethyl group from 5,10-methylenetetrahydrofolate is transferred onto alpha-ketoisovalerate to form ketopantoate. The polypeptide is 3-methyl-2-oxobutanoate hydroxymethyltransferase (Bartonella tribocorum (strain CIP 105476 / IBS 506)).